We begin with the raw amino-acid sequence, 551 residues long: Adenine deaminase (551 aa).

It belongs to the metallo-dependent hydrolases superfamily. Adenine deaminase family. Mn(2+) serves as cofactor.

It carries out the reaction adenine + H2O + H(+) = hypoxanthine + NH4(+). The protein is Adenine deaminase of Leuconostoc mesenteroides subsp. mesenteroides (strain ATCC 8293 / DSM 20343 / BCRC 11652 / CCM 1803 / JCM 6124 / NCDO 523 / NBRC 100496 / NCIMB 8023 / NCTC 12954 / NRRL B-1118 / 37Y).